The following is a 281-amino-acid chain: Fructose-bisphosphate aldolase class 1 (281 aa).

Catalysis depends on Lys-191, which acts as the Schiff-base intermediate with dihydroxyacetone-P.

This sequence belongs to the DeoC/FbaB aldolase family. As to quaternary structure, homooctamer.

It localises to the cytoplasm. The enzyme catalyses beta-D-fructose 1,6-bisphosphate = D-glyceraldehyde 3-phosphate + dihydroxyacetone phosphate. With respect to regulation, activated by citrate. This chain is Fructose-bisphosphate aldolase class 1 (fba), found in Pyrococcus abyssi (strain GE5 / Orsay).